A 195-amino-acid chain; its full sequence is ATP-dependent Clp protease proteolytic subunit 3 (195 aa).

Ser97 acts as the Nucleophile in catalysis. His122 is a catalytic residue.

This sequence belongs to the peptidase S14 family. As to quaternary structure, fourteen ClpP subunits assemble into 2 heptameric rings which stack back to back to give a disk-like structure with a central cavity, resembling the structure of eukaryotic proteasomes.

The protein resides in the cytoplasm. It carries out the reaction Hydrolysis of proteins to small peptides in the presence of ATP and magnesium. alpha-casein is the usual test substrate. In the absence of ATP, only oligopeptides shorter than five residues are hydrolyzed (such as succinyl-Leu-Tyr-|-NHMec, and Leu-Tyr-Leu-|-Tyr-Trp, in which cleavage of the -Tyr-|-Leu- and -Tyr-|-Trp bonds also occurs).. Its function is as follows. Cleaves peptides in various proteins in a process that requires ATP hydrolysis. Has a chymotrypsin-like activity. Plays a major role in the degradation of misfolded proteins. This chain is ATP-dependent Clp protease proteolytic subunit 3, found in Rhizobium meliloti (strain 1021) (Ensifer meliloti).